The primary structure comprises 119 residues: NLYQFKNMIKCTVPSRSWLDFANYGCYCGRGGSGTPVDDLDRCCQIHDNCYNEAGKISGCWPYFKTYSYECSQGTLTCKGDNNSCAASVCDCDRLAAICFAGAPYNNDNYNINLKARCQ.

Intrachain disulfides connect Cys-11–Cys-71, Cys-26–Cys-118, Cys-28–Cys-44, Cys-43–Cys-99, Cys-50–Cys-92, Cys-60–Cys-85, and Cys-78–Cys-90. Residues Tyr-27, Gly-29, and Gly-31 each contribute to the Ca(2+) site. His-47 is a catalytic residue. Asp-48 provides a ligand contact to Ca(2+). Residue Asp-93 is part of the active site.

Belongs to the phospholipase A2 family. Group I subfamily. D49 sub-subfamily. The cofactor is Ca(2+). In terms of tissue distribution, expressed by the venom gland.

The protein resides in the secreted. It carries out the reaction a 1,2-diacyl-sn-glycero-3-phosphocholine + H2O = a 1-acyl-sn-glycero-3-phosphocholine + a fatty acid + H(+). In terms of biological role, PLA2 catalyzes the calcium-dependent hydrolysis of the 2-acyl groups in 3-sn-phosphoglycerides. In Naja oxiana (Central Asian cobra), this protein is Acidic phospholipase A2 E.